The following is a 382-amino-acid chain: Kelch domain-containing protein 3 (382 aa).

Kelch repeat units lie at residues 25 to 77, 88 to 138, 139 to 189, 191 to 249, and 251 to 301; these read RVYS…PYMR, TVFL…VLGK, TMYI…TMLG, HMYV…GYNG, and LYIF…IVGD.

As to quaternary structure, component of a CRL2(KLHDC3) complex, also named ECS(KLHDC3) complex, composed of CUL2, Elongin BC (ELOB and ELOC), RBX1 and substrate-specific adapter KLHDC3. May form oligomers as a KLHDC3-ELOB-ELOC complex; this interaction is likely autoinhibitory for the E3 ligase complex.

Its subcellular location is the cytoplasm. The protein operates within protein modification; protein ubiquitination. In terms of biological role, substrate-recognition component of a Cul2-RING (CRL2) E3 ubiquitin-protein ligase complex of the DesCEND (destruction via C-end degrons) pathway, which recognizes a C-degron located at the extreme C terminus of target proteins, leading to their ubiquitination and degradation. The C-degron recognized by the DesCEND pathway is usually a motif of less than ten residues and can be present in full-length proteins, truncated proteins or proteolytically cleaved forms. The CRL2(KLHDC3) complex specifically recognizes proteins with a glycine (Gly) at the C-terminus, leading to their ubiquitination and degradation: recognizes the C-terminal -Arg-(Xaa)n-Arg-Gly, -Arg-(Xaa)n-Lys-Gly, and -Arg-(Xaa)n-Gln-Gly degrons. The CRL2(KLHDC3) complex mediates ubiquitination and degradation of truncated SELENOV and SEPHS2 selenoproteins produced by failed UGA/Sec decoding, which end with a glycine. May be involved in meiotic recombination process. This is Kelch domain-containing protein 3 from Bos taurus (Bovine).